Here is a 340-residue protein sequence, read N- to C-terminus: NAC domain-containing protein 89 (340 aa).

Residues 21-164 enclose the NAC domain; the sequence is VFPGFKFSPT…AMVVCRVRRN (144 aa). A DNA-binding region spans residues 119–170; sequence IGTKRTLVFHIGRAPKGERTDWIMHEYCVKGVSLDDAMVVCRVRRNKEYNSG. Residues 167 to 181 show a composition bias toward polar residues; it reads YNSGTSQKAPKPNSS. The segment at 167–198 is disordered; the sequence is YNSGTSQKAPKPNSSAEKHAKVQNGATSSGSP.

As to quaternary structure, interacts with PAS1.

The protein resides in the cytoplasm. It localises to the nucleus. Transcription factor involved in plant cell division. The sequence is that of NAC domain-containing protein 89 (NAC089) from Arabidopsis thaliana (Mouse-ear cress).